Consider the following 773-residue polypeptide: Phenylalanine--tRNA ligase beta subunit (773 aa).

Residues 39 to 150 (LKAPDKVVVG…GKLELGRPLN (112 aa)) enclose the tRNA-binding domain. The B5 domain maps to 391 to 467 (KELPIIPISI…RIIGIDNIAS (77 aa)). Mg(2+)-binding residues include D445, D451, E454, and E455. The region spanning 682-773 (SKFPAITRDL…TLKNLGLDLR (92 aa)) is the FDX-ACB domain.

Belongs to the phenylalanyl-tRNA synthetase beta subunit family. Type 1 subfamily. In terms of assembly, tetramer of two alpha and two beta subunits. It depends on Mg(2+) as a cofactor.

It localises to the cytoplasm. It catalyses the reaction tRNA(Phe) + L-phenylalanine + ATP = L-phenylalanyl-tRNA(Phe) + AMP + diphosphate + H(+). The protein is Phenylalanine--tRNA ligase beta subunit of Campylobacter jejuni (strain RM1221).